Consider the following 53-residue polypeptide: Sec-independent protein translocase protein TatA (53 aa).

Residues 1–21 (MGMSFSHLLIVLLIIFVLFGA) traverse the membrane as a helical segment.

It belongs to the TatA/E family. The Tat system comprises two distinct complexes: a TatABC complex, containing multiple copies of TatA, TatB and TatC subunits, and a separate TatA complex, containing only TatA subunits. Substrates initially bind to the TatABC complex, which probably triggers association of the separate TatA complex to form the active translocon.

It localises to the cell inner membrane. Its function is as follows. Part of the twin-arginine translocation (Tat) system that transports large folded proteins containing a characteristic twin-arginine motif in their signal peptide across membranes. TatA could form the protein-conducting channel of the Tat system. This chain is Sec-independent protein translocase protein TatA, found in Rickettsia rickettsii (strain Iowa).